We begin with the raw amino-acid sequence, 207 residues long: Pyridoxal 5'-phosphate synthase subunit PdxT (207 aa).

53 to 55 (GES) contributes to the L-glutamine binding site. C85 functions as the Nucleophile in the catalytic mechanism. Residues R114 and 143–144 (IR) contribute to the L-glutamine site. Residues H184 and E186 each act as charge relay system in the active site.

Belongs to the glutaminase PdxT/SNO family. In terms of assembly, in the presence of PdxS, forms a dodecamer of heterodimers. Only shows activity in the heterodimer.

It carries out the reaction aldehydo-D-ribose 5-phosphate + D-glyceraldehyde 3-phosphate + L-glutamine = pyridoxal 5'-phosphate + L-glutamate + phosphate + 3 H2O + H(+). The catalysed reaction is L-glutamine + H2O = L-glutamate + NH4(+). It participates in cofactor biosynthesis; pyridoxal 5'-phosphate biosynthesis. In terms of biological role, catalyzes the hydrolysis of glutamine to glutamate and ammonia as part of the biosynthesis of pyridoxal 5'-phosphate. The resulting ammonia molecule is channeled to the active site of PdxS. This chain is Pyridoxal 5'-phosphate synthase subunit PdxT, found in Acidothermus cellulolyticus (strain ATCC 43068 / DSM 8971 / 11B).